Consider the following 220-residue polypeptide: Probable nicotinate-nucleotide adenylyltransferase (220 aa).

This sequence belongs to the NadD family.

The catalysed reaction is nicotinate beta-D-ribonucleotide + ATP + H(+) = deamido-NAD(+) + diphosphate. The protein operates within cofactor biosynthesis; NAD(+) biosynthesis; deamido-NAD(+) from nicotinate D-ribonucleotide: step 1/1. Catalyzes the reversible adenylation of nicotinate mononucleotide (NaMN) to nicotinic acid adenine dinucleotide (NaAD). This chain is Probable nicotinate-nucleotide adenylyltransferase, found in Yersinia enterocolitica serotype O:8 / biotype 1B (strain NCTC 13174 / 8081).